The sequence spans 441 residues: Zinc finger and BTB domain-containing protein 8A (441 aa).

One can recognise a BTB domain in the interval 24 to 92 (CDCSILVEGK…VYSGKLSLTG (69 aa)). Polar residues-rich tracts occupy residues 143–170 (NGVE…SPEQ) and 178–196 (KSWN…TQQP). The segment at 143-251 (NGVERSSFYS…QSEEQAQIDA (109 aa)) is disordered. Phosphoserine is present on residues Ser-161 and Ser-167. Glycyl lysine isopeptide (Lys-Gly) (interchain with G-Cter in SUMO2) cross-links involve residues Lys-178, Lys-182, Lys-191, and Lys-199. The segment covering 198-208 (AKHEPRKESIK) has biased composition (basic and acidic residues). The span at 234–243 (SDSSSHVSQS) shows a compositional bias: low complexity. C2H2-type zinc fingers lie at residues 282-304 (FKCP…LRCH) and 310-333 (YPCQ…RTIH). Lys-437 participates in a covalent cross-link: Glycyl lysine isopeptide (Lys-Gly) (interchain with G-Cter in SUMO2).

Its subcellular location is the nucleus. In terms of biological role, may be involved in transcriptional regulation. This Homo sapiens (Human) protein is Zinc finger and BTB domain-containing protein 8A (ZBTB8A).